We begin with the raw amino-acid sequence, 850 residues long: Trimethylamine-N-oxide reductase (850 aa).

A signal peptide (tat-type signal) is located at residues 1 to 39; that stretch reads MKNKDSLHVSRRRFLAQLGGLTVAGMLGPSLLTPRSARA. Residue Ser191 coordinates Mo-bis(molybdopterin guanine dinucleotide).

This sequence belongs to the prokaryotic molybdopterin-containing oxidoreductase family. The cofactor is Mo-bis(molybdopterin guanine dinucleotide). In terms of processing, predicted to be exported by the Tat system. The position of the signal peptide cleavage has not been experimentally proven.

It localises to the periplasm. The enzyme catalyses trimethylamine + 2 Fe(III)-[cytochrome c] + H2O = trimethylamine N-oxide + 2 Fe(II)-[cytochrome c] + 3 H(+). Reduces trimethylamine-N-oxide (TMAO) into trimethylamine; an anaerobic reaction coupled to energy-yielding reactions. The chain is Trimethylamine-N-oxide reductase (torA) from Salmonella typhi.